A 159-amino-acid chain; its full sequence is Large ribosomal subunit protein uL15 (159 aa).

Over residues 1–11 (MKLNELRDNEG) the composition is skewed to basic and acidic residues. A disordered region spans residues 1 to 40 (MKLNELRDNEGARYQSKRLGRGIGSGKGKTSGKGVKGQTS). Positions 21–35 (RGIGSGKGKTSGKGV) are enriched in gly residues.

It belongs to the universal ribosomal protein uL15 family. As to quaternary structure, part of the 50S ribosomal subunit.

Its function is as follows. Binds to the 23S rRNA. This Paramagnetospirillum magneticum (strain ATCC 700264 / AMB-1) (Magnetospirillum magneticum) protein is Large ribosomal subunit protein uL15.